A 139-amino-acid chain; its full sequence is Small ribosomal subunit protein uS11 (139 aa).

This sequence belongs to the universal ribosomal protein uS11 family. Part of the 30S ribosomal subunit.

In terms of biological role, located on the platform of the 30S subunit. This chain is Small ribosomal subunit protein uS11, found in Pyrobaculum islandicum (strain DSM 4184 / JCM 9189 / GEO3).